Reading from the N-terminus, the 197-residue chain is dITP/XTP pyrophosphatase (197 aa).

Thr8–Lys13 is a substrate binding site. Mg(2+) contacts are provided by Glu40 and Asp69. Asp69 serves as the catalytic Proton acceptor. Substrate is bound by residues Ser70, Phe154–Asp157, Lys177, and His182–Arg183.

It belongs to the HAM1 NTPase family. In terms of assembly, homodimer. It depends on Mg(2+) as a cofactor.

It carries out the reaction XTP + H2O = XMP + diphosphate + H(+). The enzyme catalyses dITP + H2O = dIMP + diphosphate + H(+). The catalysed reaction is ITP + H2O = IMP + diphosphate + H(+). Pyrophosphatase that catalyzes the hydrolysis of nucleoside triphosphates to their monophosphate derivatives, with a high preference for the non-canonical purine nucleotides XTP (xanthosine triphosphate), dITP (deoxyinosine triphosphate) and ITP. Seems to function as a house-cleaning enzyme that removes non-canonical purine nucleotides from the nucleotide pool, thus preventing their incorporation into DNA/RNA and avoiding chromosomal lesions. The protein is dITP/XTP pyrophosphatase (rdgB) of Escherichia coli O157:H7.